We begin with the raw amino-acid sequence, 396 residues long: UPF0046 protein T07D4.2 (396 aa).

The disordered stretch occupies residues 73 to 94 (SRRGSIASGIPMDKKTRRKLSN).

This sequence belongs to the UPF0046 family.

This Caenorhabditis elegans protein is UPF0046 protein T07D4.2.